A 514-amino-acid polypeptide reads, in one-letter code: 1,25-dihydroxyvitamin D(3) 24-hydroxylase, mitochondrial (514 aa).

The N-terminal 35 residues, 1–35, are a transit peptide targeting the mitochondrion; the sequence is MSCPIDKRRPLIAFLRRLRDLGQPPRSVTSKAHVK. Cysteine 462 is a heme binding site.

Belongs to the cytochrome P450 family. Requires heme as cofactor.

The protein resides in the mitochondrion. It carries out the reaction calcitriol + 2 reduced [adrenodoxin] + O2 + 2 H(+) = calcitetrol + 2 oxidized [adrenodoxin] + H2O. It catalyses the reaction calcitetrol + 2 reduced [adrenodoxin] + O2 + 2 H(+) = (1S)-1,25-dihydroxy-24-oxocalciol + 2 oxidized [adrenodoxin] + 2 H2O. The catalysed reaction is (1S)-1,25-dihydroxy-24-oxocalciol + 2 reduced [adrenodoxin] + O2 + 2 H(+) = (1S)-1,23,25-trihydroxy-24-oxocalciol + 2 oxidized [adrenodoxin] + H2O. The enzyme catalyses (1S)-1,23-dihydroxy-24,25,26,27-tetranorcalciol + 2 reduced [adrenodoxin] + O2 + 2 H(+) = (1S)-1-hydroxy-23-oxo-24,25,26,27-tetranorcalciol + 2 oxidized [adrenodoxin] + 2 H2O. It carries out the reaction (1S)-1-hydroxy-23-oxo-24,25,26,27-tetranorcalciol + 2 reduced [adrenodoxin] + O2 + H(+) = calcitroate + 2 oxidized [adrenodoxin] + H2O. It catalyses the reaction calcidiol + 2 reduced [adrenodoxin] + O2 + 2 H(+) = secalciferol + 2 oxidized [adrenodoxin] + H2O. The catalysed reaction is secalciferol + 2 reduced [adrenodoxin] + O2 + 2 H(+) = 25-hydroxy-24-oxocalciol + 2 oxidized [adrenodoxin] + 2 H2O. The enzyme catalyses 25-hydroxy-24-oxocalciol + 2 reduced [adrenodoxin] + O2 + 2 H(+) = 23S,25-dihydroxy-24-oxocholecalciferol + 2 oxidized [adrenodoxin] + H2O. It carries out the reaction 20S,23-dihydroxycholecalciferol + 2 reduced [adrenodoxin] + O2 + 2 H(+) = 20S,23,25-trihydroxycholecalciferol + 2 oxidized [adrenodoxin] + H2O. It catalyses the reaction 20S,23-dihydroxycholecalciferol + 2 reduced [adrenodoxin] + O2 + 2 H(+) = 20S,23,24-trihydroxycholecalciferol + 2 oxidized [adrenodoxin] + H2O. The catalysed reaction is 20S-hydroxycholecalciferol + 2 reduced [adrenodoxin] + O2 + 2 H(+) = 20S,25-dihydroxycholecalciferol + 2 oxidized [adrenodoxin] + H2O. The enzyme catalyses 20S-hydroxycholecalciferol + 2 reduced [adrenodoxin] + O2 + 2 H(+) = 20S,24S-dihydroxycholecalciferol + 2 oxidized [adrenodoxin] + H2O. It carries out the reaction 20S-hydroxycholecalciferol + 2 reduced [adrenodoxin] + O2 + 2 H(+) = 20S,24R-dihydroxycholecalciferol + 2 oxidized [adrenodoxin] + H2O. Its function is as follows. A cytochrome P450 monooxygenase with a key role in vitamin D catabolism and calcium homeostasis. Via C24-oxidation pathway, catalyzes the inactivation of both the vitamin D precursor calcidiol (25-hydroxyvitamin D(3)) and the active hormone calcitriol (1-alpha,25-dihydroxyvitamin D(3)). With initial hydroxylation at C-24 (via C24-oxidation pathway), performs a sequential 6-step oxidation of calcitriol leading to the formation of the biliary metabolite calcitroic acid. Hydroxylates at C-24 or C-25 other vitamin D active metabolites, such as CYP11A1-derived secosteroids 20S-hydroxycholecalciferol and 20S,23-dihydroxycholecalciferol. Mechanistically, uses molecular oxygen inserting one oxygen atom into a substrate, and reducing the second into a water molecule, with two electrons provided by NADPH via FDXR/adrenodoxin reductase and FDX1/adrenodoxin. The sequence is that of 1,25-dihydroxyvitamin D(3) 24-hydroxylase, mitochondrial from Mus musculus (Mouse).